Reading from the N-terminus, the 257-residue chain is MPASMFSIDNILAARPRCKDSVLPVAPSAAAPVVFPALHGDSLYGASGGASSDYGAFYPRPVAPGGAGLQAAVGGSRLGYNNYFYGQLHVQAAPVGPACCGAVPPLGAQQCSCVPTPPGYEGPGSVLVSPVPHQMLPYMNVGTLSRTELQLLNQLHCRRKRRHRTIFTDEQLEALENLFQETKYPDVGTREQLARKVHLREEKVEVWFKNRRAKWRRQKRSSSEESENAEKWNKTSSSKASPEKREEEGKSDLDSDS.

The segment at residues 160–219 (KRRHRTIFTDEQLEALENLFQETKYPDVGTREQLARKVHLREEKVEVWFKNRRAKWRRQK) is a DNA-binding region (homeobox). Residues 213-257 (AKWRRQKRSSSEESENAEKWNKTSSSKASPEKREEEGKSDLDSDS) form a disordered region. A compositionally biased stretch (basic and acidic residues) spans 241–257 (SPEKREEEGKSDLDSDS).

This sequence belongs to the paired homeobox family. Bicoid subfamily.

Its subcellular location is the nucleus. In terms of biological role, regulates chordin (CHRD). May play a role in spatial programing within discrete embryonic fields or lineage compartments during organogenesis. In concert with NKX3-2, plays a role in defining the structural components of the middle ear; required for the development of the entire tympanic ring. Probably involved in the regulatory networks that define neural crest cell fate specification and determine mesoderm cell lineages in mammals. This chain is Homeobox protein goosecoid (GSC), found in Saguinus labiatus (Red-chested mustached tamarin).